Consider the following 109-residue polypeptide: U4-lycotoxin-Ls1d (109 aa).

The first 22 residues, Met1 to Ala22, serve as a signal peptide directing secretion. Residues Met23–Arg44 constitute a propeptide that is removed on maturation. The interval Ala45–Cys88 is knottin domain. 4 disulfide bridges follow: Cys48-Cys63, Cys55-Cys72, Cys62-Cys88, and Cys74-Cys86. The linear cationic cytotoxin domain stretch occupies residues Gln89–Val108.

It belongs to the neurotoxin 19 (CSTX) family. 05 (U4-Lctx) subfamily. In terms of tissue distribution, expressed by the venom gland.

It localises to the secreted. Functionally, enhances the high-affinity desensitization of human P2RX3 purinoceptors. This Lycosa singoriensis (Wolf spider) protein is U4-lycotoxin-Ls1d.